The chain runs to 433 residues: GTPase Obg (433 aa).

The 159-residue stretch at 1-159 (MAITDYCECR…LNVSLEVKYL (159 aa)) folds into the Obg domain. The OBG-type G domain occupies 160–329 (ANVGIVGFPN…LLDRVFELYN (170 aa)). Residues 166 to 173 (GFPNSGKS), 191 to 195 (FTTLI), 212 to 215 (DIPG), 282 to 285 (NKID), and 310 to 312 (ISA) contribute to the GTP site. The Mg(2+) site is built by S173 and T193. Residues 355-433 (TNENNNDPLN…FDGCEFVIND (79 aa)) form the OCT domain.

Belongs to the TRAFAC class OBG-HflX-like GTPase superfamily. OBG GTPase family. As to quaternary structure, monomer. The cofactor is Mg(2+).

It localises to the cytoplasm. Its function is as follows. An essential GTPase which binds GTP, GDP and possibly (p)ppGpp with moderate affinity, with high nucleotide exchange rates and a fairly low GTP hydrolysis rate. Plays a role in control of the cell cycle, stress response, ribosome biogenesis and in those bacteria that undergo differentiation, in morphogenesis control. In Mycoplasma genitalium (strain ATCC 33530 / DSM 19775 / NCTC 10195 / G37) (Mycoplasmoides genitalium), this protein is GTPase Obg.